A 75-amino-acid polypeptide reads, in one-letter code: ATP synthase subunit epsilon, mitochondrial (75 aa).

The transit peptide at 1-9 directs the protein to the mitochondrion; it reads MIRRSCALL.

It belongs to the eukaryotic ATPase epsilon family. F-type ATPases have 2 components, F(1) - the catalytic core - and F(o) - the membrane proton channel. F(1) has five subunits: alpha(3), beta(3), gamma(1), delta(1), epsilon(1), plus the additional subunit P18 (Tb427.05.1710) that is not present in F(1)F(o) ATP synthase from metazoa. Subunit P18 (Tb927.5.1710) interacts with the alpha subunit with a 1:1 stoichiometry; the interaction is direct. Subunit gamma is part of the central stalk. F(o) has three main subunits: a, b and c. The trypanosomal ATPase complex contains additional subunits that are not present in the F(1)F(o) ATP synthase from metazoa.

The protein localises to the mitochondrion. It is found in the mitochondrion inner membrane. In terms of biological role, mitochondrial membrane ATP synthase (F(1)F(o) ATP synthase) produces ATP from ADP in the presence of a proton gradient across the membrane which is generated by electron transport complexes of the respiratory chain. F-type ATPases consist of two structural domains, F(1) - containing the extramembraneous catalytic core, and F(o) - containing the membrane proton channel, linked together by a central stalk and a peripheral stalk. During catalysis, ATP synthesis in the catalytic domain of F(1) is coupled via a rotary mechanism of the central stalk subunits to proton translocation. Subunits alpha and beta form the catalytic core in F(1). Rotation of the central stalk against the surrounding alpha(3)beta(3) subunits leads to hydrolysis of ATP in three separate catalytic sites on the beta subunits. Contrary to the procyclic, insect form that requires F(1)F(o) ATP synthase for ATP synthesis, the bloodstream form relies on ATP hydrolysis by F(1)F(o) ATP synthase to maintain its mitochondrial membrane potential. In Trypanosoma brucei brucei, this protein is ATP synthase subunit epsilon, mitochondrial.